We begin with the raw amino-acid sequence, 954 residues long: Glycine dehydrogenase (decarboxylating) (954 aa).

Lysine 699 bears the N6-(pyridoxal phosphate)lysine mark.

It belongs to the GcvP family. As to quaternary structure, the glycine cleavage system is composed of four proteins: P, T, L and H. Requires pyridoxal 5'-phosphate as cofactor.

The enzyme catalyses N(6)-[(R)-lipoyl]-L-lysyl-[glycine-cleavage complex H protein] + glycine + H(+) = N(6)-[(R)-S(8)-aminomethyldihydrolipoyl]-L-lysyl-[glycine-cleavage complex H protein] + CO2. The glycine cleavage system catalyzes the degradation of glycine. The P protein binds the alpha-amino group of glycine through its pyridoxal phosphate cofactor; CO(2) is released and the remaining methylamine moiety is then transferred to the lipoamide cofactor of the H protein. This chain is Glycine dehydrogenase (decarboxylating), found in Nitrobacter winogradskyi (strain ATCC 25391 / DSM 10237 / CIP 104748 / NCIMB 11846 / Nb-255).